A 130-amino-acid polypeptide reads, in one-letter code: T-cell receptor beta chain V region A20.2.25 (130 aa).

The N-terminal stretch at 1 to 21 (MSCRLLLYVSLCLVETALMNT) is a signal peptide. Residues 22–112 (KITQSPRYLI…DSAVYFCASS (91 aa)) are v segment. Residues N36 and N75 are each glycosylated (N-linked (GlcNAc...) asparagine). Positions 113-115 (HGE) are d segment. The interval 116-130 (NTEVFFGKGTTLTVV) is j segment.

The chain is T-cell receptor beta chain V region A20.2.25 from Mus musculus (Mouse).